The following is a 545-amino-acid chain: Glucose-6-phosphate isomerase (545 aa).

Glutamate 351 acts as the Proton donor in catalysis. Active-site residues include histidine 382 and lysine 510.

This sequence belongs to the GPI family.

It is found in the cytoplasm. It catalyses the reaction alpha-D-glucose 6-phosphate = beta-D-fructose 6-phosphate. It functions in the pathway carbohydrate biosynthesis; gluconeogenesis. It participates in carbohydrate degradation; glycolysis; D-glyceraldehyde 3-phosphate and glycerone phosphate from D-glucose: step 2/4. In terms of biological role, catalyzes the reversible isomerization of glucose-6-phosphate to fructose-6-phosphate. This is Glucose-6-phosphate isomerase from Shewanella baltica (strain OS185).